The following is a 142-amino-acid chain: NADH-quinone oxidoreductase subunit A (142 aa).

3 helical membrane passes run 8 to 28 (FGTVFVFLLLGIIFVVGGYLT), 63 to 83 (FYVVALIFIIFDVEVVFLFPW), and 93 to 113 (FALIEALVFAGILVIGLVYAW).

It belongs to the complex I subunit 3 family. NDH-1 is composed of 14 different subunits. Subunits NuoA, H, J, K, L, M, N constitute the membrane sector of the complex.

Its subcellular location is the cell inner membrane. The catalysed reaction is a quinone + NADH + 5 H(+)(in) = a quinol + NAD(+) + 4 H(+)(out). Its function is as follows. NDH-1 shuttles electrons from NADH, via FMN and iron-sulfur (Fe-S) centers, to quinones in the respiratory chain. The immediate electron acceptor for the enzyme in this species is believed to be a menaquinone. Couples the redox reaction to proton translocation (for every two electrons transferred, four hydrogen ions are translocated across the cytoplasmic membrane), and thus conserves the redox energy in a proton gradient. The protein is NADH-quinone oxidoreductase subunit A of Chlorobium phaeobacteroides (strain BS1).